The primary structure comprises 276 residues: Undecaprenyl-diphosphatase (276 aa).

6 helical membrane passes run 43–63 (RAMA…VWEF), 85–105 (LNLL…ADTI), 109–129 (LFNA…MLWA), 183–203 (AATE…AVYS), 218–238 (VFAI…RGLL), and 254–274 (IAFG…WASA).

This sequence belongs to the UppP family.

It is found in the cell inner membrane. It carries out the reaction di-trans,octa-cis-undecaprenyl diphosphate + H2O = di-trans,octa-cis-undecaprenyl phosphate + phosphate + H(+). Its function is as follows. Catalyzes the dephosphorylation of undecaprenyl diphosphate (UPP). Confers resistance to bacitracin. In Pseudomonas syringae pv. syringae (strain B728a), this protein is Undecaprenyl-diphosphatase.